The chain runs to 3214 residues: Ciliogenesis and planar polarity effector 1 (3214 aa).

A run of 2 helical transmembrane segments spans residues 593–613 (KLML…LQFI) and 632–652 (AWVL…YWDM). Disordered stretches follow at residues 1496-1523 (VGKK…ETPG), 1644-1667 (GNQS…PLQS), 1879-1991 (DGRH…HRAQ), 2047-2142 (FGES…FPPA), 2214-2241 (SLSD…SSHC), 2398-2440 (GITQ…ISND), 2491-2529 (GSHD…GHEP), 2622-2650 (TFQS…QSGE), 2824-2855 (VSLQ…HSSQ), 3037-3127 (TAPA…CRED), and 3158-3181 (MSPA…VSES). The segment covering 1512-1523 (NSQRKEDDETPG) has biased composition (basic and acidic residues). The span at 1932–1942 (QCSRKEPRDAS) shows a compositional bias: basic and acidic residues. Polar residues-rich tracts occupy residues 1943-1953 (VDTNLTEQKGA), 1971-1984 (NGAQ…QKTQ), and 2047-2068 (FGES…SRQR). Residues 2079-2099 (CTREPGKNSPADHKRISRPDQ) show a composition bias toward basic and acidic residues. A compositionally biased stretch (polar residues) spans 2215–2241 (LSDSCQPPVSQRTVHTTLPSPSDSSHC). The span at 2500 to 2514 (DPDKEGPSQKADSES) shows a compositional bias: basic and acidic residues. Composition is skewed to polar residues over residues 2515 to 2524 (SKNPQATAAS) and 2622 to 2634 (TFQS…STRG). The span at 2830–2848 (EDVEEQKDAEETSETEFSE) shows a compositional bias: acidic residues. The span at 3090–3107 (RGSSQLRGSQPPCQSQKP) shows a compositional bias: polar residues.

Interacts with FUZ; INTU and WDPCP; the interactors are proposed to form the core CPLANE (ciliogenesis and planar polarity effectors) complex.

The protein resides in the membrane. Its subcellular location is the cell projection. It is found in the cilium. In terms of biological role, involved in ciliogenesis. Involved in the establishment of cell polarity required for directional cell migration. Proposed to act in association with the CPLANE (ciliogenesis and planar polarity effectors) complex. Involved in recruitment of peripheral IFT-A proteins to basal bodies. The sequence is that of Ciliogenesis and planar polarity effector 1 from Mus musculus (Mouse).